The following is a 508-amino-acid chain: Acetyl-coenzyme A carboxylase carboxyl transferase subunit beta, chloroplastic (508 aa).

Disordered stretches follow at residues 30–51 and 173–234; these read PIEN…NIQG and NSSN…SSTH. A compositionally biased stretch (basic and acidic residues) spans 35-47; it reads SESKDPNRNDTDK. Positions 173–219 are enriched in low complexity; that stretch reads NSSNNNSSNENSSNENSSNENSSNENSSNDYISSSISSQSENSSQNE. Over residues 220–234 the composition is skewed to polar residues; that stretch reads DITTSDQTIPESSTH. Residues 244 to 508 form the CoA carboxyltransferase N-terminal domain; the sequence is LWVQCENCYG…LHTFFPLNQN (265 aa). Zn(2+)-binding residues include cysteine 248, cysteine 251, cysteine 267, and cysteine 270. A C4-type zinc finger spans residues 248 to 270; that stretch reads CENCYGLNYKKFFKSKMHLCEQC.

The protein belongs to the AccD/PCCB family. As to quaternary structure, acetyl-CoA carboxylase is a heterohexamer composed of biotin carboxyl carrier protein, biotin carboxylase and 2 subunits each of ACCase subunit alpha and ACCase plastid-coded subunit beta (accD). The cofactor is Zn(2+).

The protein resides in the plastid. It localises to the chloroplast stroma. It catalyses the reaction N(6)-carboxybiotinyl-L-lysyl-[protein] + acetyl-CoA = N(6)-biotinyl-L-lysyl-[protein] + malonyl-CoA. Its pathway is lipid metabolism; malonyl-CoA biosynthesis; malonyl-CoA from acetyl-CoA: step 1/1. Its function is as follows. Component of the acetyl coenzyme A carboxylase (ACC) complex. Biotin carboxylase (BC) catalyzes the carboxylation of biotin on its carrier protein (BCCP) and then the CO(2) group is transferred by the transcarboxylase to acetyl-CoA to form malonyl-CoA. The protein is Acetyl-coenzyme A carboxylase carboxyl transferase subunit beta, chloroplastic of Lactuca sativa (Garden lettuce).